The sequence spans 394 residues: NAD(P)H-quinone oxidoreductase subunit H (394 aa).

Belongs to the complex I 49 kDa subunit family. In terms of assembly, NDH-1 can be composed of about 15 different subunits; different subcomplexes with different compositions have been identified which probably have different functions.

Its subcellular location is the cellular thylakoid membrane. The catalysed reaction is a plastoquinone + NADH + (n+1) H(+)(in) = a plastoquinol + NAD(+) + n H(+)(out). It carries out the reaction a plastoquinone + NADPH + (n+1) H(+)(in) = a plastoquinol + NADP(+) + n H(+)(out). NDH-1 shuttles electrons from an unknown electron donor, via FMN and iron-sulfur (Fe-S) centers, to quinones in the respiratory and/or the photosynthetic chain. The immediate electron acceptor for the enzyme in this species is believed to be plastoquinone. Couples the redox reaction to proton translocation, and thus conserves the redox energy in a proton gradient. Cyanobacterial NDH-1 also plays a role in inorganic carbon-concentration. This Microcystis aeruginosa (strain NIES-843 / IAM M-2473) protein is NAD(P)H-quinone oxidoreductase subunit H.